The chain runs to 295 residues: Acetylglutamate kinase (295 aa).

Substrate contacts are provided by residues 70–71 (GG), Arg-92, and Asn-191.

This sequence belongs to the acetylglutamate kinase family. ArgB subfamily.

It localises to the cytoplasm. It catalyses the reaction N-acetyl-L-glutamate + ATP = N-acetyl-L-glutamyl 5-phosphate + ADP. It participates in amino-acid biosynthesis; L-arginine biosynthesis; N(2)-acetyl-L-ornithine from L-glutamate: step 2/4. Catalyzes the ATP-dependent phosphorylation of N-acetyl-L-glutamate. The sequence is that of Acetylglutamate kinase from Mycolicibacterium paratuberculosis (strain ATCC BAA-968 / K-10) (Mycobacterium paratuberculosis).